The following is a 349-amino-acid chain: Methylthioribose-1-phosphate isomerase (349 aa).

Residues 51 to 53, Arg-94, and Gln-199 contribute to the substrate site; that span reads RGA. The active-site Proton donor is the Asp-240. 250–251 is a substrate binding site; it reads NK.

This sequence belongs to the EIF-2B alpha/beta/delta subunits family. MtnA subfamily. In terms of assembly, homodimer.

The catalysed reaction is 5-(methylsulfanyl)-alpha-D-ribose 1-phosphate = 5-(methylsulfanyl)-D-ribulose 1-phosphate. The protein operates within amino-acid biosynthesis; L-methionine biosynthesis via salvage pathway; L-methionine from S-methyl-5-thio-alpha-D-ribose 1-phosphate: step 1/6. Catalyzes the interconversion of methylthioribose-1-phosphate (MTR-1-P) into methylthioribulose-1-phosphate (MTRu-1-P). This chain is Methylthioribose-1-phosphate isomerase, found in Bacillus mycoides (strain KBAB4) (Bacillus weihenstephanensis).